We begin with the raw amino-acid sequence, 168 residues long: Small ribosomal subunit protein uS5 (168 aa).

One can recognise an S5 DRBM domain in the interval 13–76 (LAEKLIAVNR…EKARRNMINV (64 aa)).

It belongs to the universal ribosomal protein uS5 family. In terms of assembly, part of the 30S ribosomal subunit. Contacts proteins S4 and S8.

In terms of biological role, with S4 and S12 plays an important role in translational accuracy. Located at the back of the 30S subunit body where it stabilizes the conformation of the head with respect to the body. This Pseudoalteromonas translucida (strain TAC 125) protein is Small ribosomal subunit protein uS5.